The sequence spans 416 residues: MGYGNRASSKTPAISGLREKHQQDLEKLTLTSQPFKTLRLFVVAVFLYVRRWSSYLLANVGWLILFCSIFVAFAALLVTLDGPHVKHVEELSEYTRFGLWWIFLGVASSIGLGSGLHTFVLYLGPHIALFTIKVMQCGRVDLKSAIYDTIQLKRSPSWLDKPCHEFGSPVFSSGVPLSSILPQVQIEAILWGLGTALGELPPYFISRAASLSGGKMKELETCSGDDNGFIAKRVNQIKSWLLSHSQYLNFFTILILASVPNPLFDLAGIMCGQFEKPFWEFFLATLIGKAIIKTHIQTVFIICVCNNQLLDWVENELIYILSFVPGFASALPELTAKLRLMKEKYLIASPPVSSDINVKKWDLSFASVWNGVVWLMLLNFFGQIVTSTAQRYLKKQQEEELDALTNKSSLTSKKSK.

Position 2 is an N-acetylglycine (G2). The Cytoplasmic portion of the chain corresponds to 2-59 (GYGNRASSKTPAISGLREKHQQDLEKLTLTSQPFKTLRLFVVAVFLYVRRWSSYLLAN). The helical transmembrane segment at 60–80 (VGWLILFCSIFVAFAALLVTL) threads the bilayer. The Lumenal portion of the chain corresponds to 81–100 (DGPHVKHVEELSEYTRFGLW). Residues 101-123 (WIFLGVASSIGLGSGLHTFVLYL) traverse the membrane as a helical segment. Topologically, residues 124–249 (GPHIALFTIK…WLLSHSQYLN (126 aa)) are cytoplasmic. The helical transmembrane segment at 250 to 270 (FFTILILASVPNPLFDLAGIM) threads the bilayer. The Lumenal segment spans residues 271-281 (CGQFEKPFWEF). The helical transmembrane segment at 282–304 (FLATLIGKAIIKTHIQTVFIICV) threads the bilayer. At 305-315 (CNNQLLDWVEN) the chain is on the cytoplasmic side. The chain crosses the membrane as a helical span at residues 316 to 336 (ELIYILSFVPGFASALPELTA). Topologically, residues 337-364 (KLRLMKEKYLIASPPVSSDINVKKWDLS) are lumenal. A helical transmembrane segment spans residues 365 to 385 (FASVWNGVVWLMLLNFFGQIV). Residues 386–416 (TSTAQRYLKKQQEEELDALTNKSSLTSKKSK) are Cytoplasmic-facing.

This sequence belongs to the VMP1 family.

The protein localises to the endoplasmic reticulum membrane. Its function is as follows. Involved in the early secretory pathway. Required for the correct export of secretory products from the endoplasmic reticulum (ER) and involved in the maintenance of ER integrity. The sequence is that of Vacuole membrane protein KMS2 from Arabidopsis thaliana (Mouse-ear cress).